A 344-amino-acid chain; its full sequence is Glyceraldehyde-3-phosphate dehydrogenase (344 aa).

Residues 11–12 and glycine 110 each bind NAD(+); that span reads TI. 139-141 contributes to the D-glyceraldehyde 3-phosphate binding site; that stretch reads SCN. Cysteine 140 acts as the Nucleophile in catalysis. Residue arginine 169 coordinates NAD(+). D-glyceraldehyde 3-phosphate is bound at residue 195-196; it reads HG. Glutamine 302 lines the NAD(+) pocket.

It belongs to the glyceraldehyde-3-phosphate dehydrogenase family. Homotetramer.

It is found in the cytoplasm. It carries out the reaction D-glyceraldehyde 3-phosphate + phosphate + NADP(+) = (2R)-3-phospho-glyceroyl phosphate + NADPH + H(+). The enzyme catalyses D-glyceraldehyde 3-phosphate + phosphate + NAD(+) = (2R)-3-phospho-glyceroyl phosphate + NADH + H(+). It participates in carbohydrate degradation; glycolysis; pyruvate from D-glyceraldehyde 3-phosphate: step 1/5. The chain is Glyceraldehyde-3-phosphate dehydrogenase from Pyrobaculum calidifontis (strain DSM 21063 / JCM 11548 / VA1).